Reading from the N-terminus, the 1032-residue chain is MPGRAEAGEAEEEAGAGSGSEAEEDALWERIEGVRHRLARALNPAKLTPYLRQCRVIDEQDEEEVLSTYRFPCRVNRTGRLMDILRCRGKRGYEAFLEALEFYYPEHFTLLTGQEPAQRCSMILDEEGPEGLTQFLMTEVRRLREARKSQLQREQQLQARGRVLEEERAGLEQRLRDQQQAQERCQRLREDWEAGSLELLRLKDENYMIAMRLAQLSEEKNSAVLRSRDLQLAVDQLKLKVSRLEEECALLRRARGPPPGAEEKEKEKEKEKEPDNVDLVSELRAENQRLTASLRELQEGLQQEASRPGAPGSERILLDILEHDWREAQDSRQELCQKLHAVQGELQWAEELRDQYLQEMEDLRLKHRTLQKDCDLYKHRMATVLAQLEEIEKERDQAIQSRDRIQLQYSQSLIEKDQYRKQVRGLEAERDELLTTLTSLEGTKALLEVQLQRAQGGTCLKACASSHSLCSNLSSTWSLSEFPSPLGGPEATGEAAVMGGPEPHNSEEATDSEKEINRLSILPFPPSAGSILRRQREEDPAPPKRSFSSMSDITGSVTLKPWSPGLSSSSSSDSVWPLGKPEGLLARGCGLDFLNRSLAIRVSGRSPPGGPEPQDKGPDGLSFYGDRWSGAVVRRVLSGPGSARMEPREQRVEAAGLEGACLEAEAQQRTLLWNQGSTLPSLMDSKACQSFHEALEAWAKGPGAEPFYIRANLTLPERADPHALCVKAQEILRLVDSAYKRRQEWFCTRVDPLTLRDLDRGTVPNYQRAQQLLEVQEKCLPSSRHRGPRSNLKKRALDQLRLVRPKPVGAPAGDSPDQLLLEPCAEPERSLRPYSLVRPLLVSALRPVVLLPECLAPRLIRNLLDLPSSRLDFQVCPAESLSGEELCPSSAPGAPKAQPATPGLGSRIRAIQESVGKKHCLLELGARGVRELVQNEIYPIVIHVEVTEKNVREVRGLLGRPGWRDSELLRQCRGSEQVLWGLPCSWVQVPAHEWGHAEELAKVVRGRILQEQARLVWVECGSSRGCPSSSEA.

Disordered regions lie at residues 1-23 (MPGR…SEAE), 253-276 (RARG…EPDN), and 481-553 (EFPS…MSDI). A Phosphoserine modification is found at Ser-18. Positions 23-115 (EEDALWERIE…EHFTLLTGQE (93 aa)) constitute a CARD domain. The stretch at 138 to 456 (TEVRRLREAR…LEVQLQRAQG (319 aa)) forms a coiled coil. Basic and acidic residues-rich tracts occupy residues 261–276 (AEEK…EPDN) and 504–517 (HNSE…KEIN).

As to quaternary structure, CARD10 and BCL10 bind to each other by CARD-CARD interaction. They both participate in a complex with MALT1, where MALT1 binds to BCL10. Interacts with TMEM43; this interaction is essential for EGFR-mediated NF-kappa-B activation. In terms of tissue distribution, detected in adult heart, kidney and liver; lower levels in intestine, placenta, muscle and lung. Also found in fetal lung, liver and kidney.

It is found in the cytoplasm. Functionally, scaffold protein that plays an important role in mediating the activation of NF-kappa-B via BCL10 or EGFR. In Homo sapiens (Human), this protein is Caspase recruitment domain-containing protein 10 (CARD10).